A 443-amino-acid chain; its full sequence is UDP-N-acetylmuramate--L-alanine ligase (443 aa).

Residue 110 to 116 coordinates ATP; it reads GAHGKTS.

This sequence belongs to the MurCDEF family.

The protein localises to the cytoplasm. It carries out the reaction UDP-N-acetyl-alpha-D-muramate + L-alanine + ATP = UDP-N-acetyl-alpha-D-muramoyl-L-alanine + ADP + phosphate + H(+). The protein operates within cell wall biogenesis; peptidoglycan biosynthesis. Functionally, cell wall formation. The chain is UDP-N-acetylmuramate--L-alanine ligase from Streptococcus agalactiae serotype III (strain NEM316).